Consider the following 228-residue polypeptide: Leucokinins (228 aa).

A signal peptide spans Met-1–Gly-18. The propeptide occupies Trp-19–Gln-164. Residues Glu-80–Asn-118 are disordered. Residues Gly-180 and Gly-193 each carry the glycine amide modification. A propeptide spanning residues Asn-197–Ile-209 is cleaved from the precursor. Residue Gly-217 is modified to Glycine amide. A propeptide spanning residues Asn-221 to Phe-228 is cleaved from the precursor.

Its subcellular location is the secreted. Functionally, stimulates both fluid secretion by the Malpighian tubules and hindgut contractions. Depolarize the transepithelial voltage of the Malpighian tubules in concentrations of less than 10(-9) M and increase the frequency of hindgut contractions at concentrations above 10(-8) M. The chain is Leucokinins from Aedes aegypti (Yellowfever mosquito).